A 750-amino-acid polypeptide reads, in one-letter code: Photosystem I P700 chlorophyll a apoprotein A1 (750 aa).

The next 8 membrane-spanning stretches (helical) occupy residues 70-93 (IFSA…FHGA), 156-179 (LYCT…FHYH), 195-219 (LNHH…HVSL), 291-309 (IAHH…GHMY), 346-369 (WHAQ…HHMY), 385-411 (LSLF…IFMV), 433-455 (AIIS…LYIH), and 531-549 (FLVH…LILL). [4Fe-4S] cluster contacts are provided by Cys-573 and Cys-582. Helical transmembrane passes span 589-610 (HVFL…HFSW) and 664-686 (LSAY…MFLF). His-675 contributes to the chlorophyll a' binding site. The chlorophyll a site is built by Met-683 and Tyr-691. Position 692 (Trp-692) interacts with phylloquinone. Residues 724 to 744 (AVGVTHYLLGGIATTWAFFLA) traverse the membrane as a helical segment.

Belongs to the PsaA/PsaB family. As to quaternary structure, the PsaA/B heterodimer binds the P700 chlorophyll special pair and subsequent electron acceptors. PSI consists of a core antenna complex that captures photons, and an electron transfer chain that converts photonic excitation into a charge separation. The eukaryotic PSI reaction center is composed of at least 11 subunits. It depends on P700 is a chlorophyll a/chlorophyll a' dimer, A0 is one or more chlorophyll a, A1 is one or both phylloquinones and FX is a shared 4Fe-4S iron-sulfur center. as a cofactor.

It localises to the plastid. The protein localises to the chloroplast thylakoid membrane. It catalyses the reaction reduced [plastocyanin] + hnu + oxidized [2Fe-2S]-[ferredoxin] = oxidized [plastocyanin] + reduced [2Fe-2S]-[ferredoxin]. Its function is as follows. PsaA and PsaB bind P700, the primary electron donor of photosystem I (PSI), as well as the electron acceptors A0, A1 and FX. PSI is a plastocyanin-ferredoxin oxidoreductase, converting photonic excitation into a charge separation, which transfers an electron from the donor P700 chlorophyll pair to the spectroscopically characterized acceptors A0, A1, FX, FA and FB in turn. Oxidized P700 is reduced on the lumenal side of the thylakoid membrane by plastocyanin. This is Photosystem I P700 chlorophyll a apoprotein A1 from Gossypium hirsutum (Upland cotton).